We begin with the raw amino-acid sequence, 177 residues long: ATP synthase subunit delta (177 aa).

Belongs to the ATPase delta chain family. As to quaternary structure, F-type ATPases have 2 components, F(1) - the catalytic core - and F(0) - the membrane proton channel. F(1) has five subunits: alpha(3), beta(3), gamma(1), delta(1), epsilon(1). F(0) has three main subunits: a(1), b(2) and c(10-14). The alpha and beta chains form an alternating ring which encloses part of the gamma chain. F(1) is attached to F(0) by a central stalk formed by the gamma and epsilon chains, while a peripheral stalk is formed by the delta and b chains.

It localises to the cell inner membrane. In terms of biological role, f(1)F(0) ATP synthase produces ATP from ADP in the presence of a proton or sodium gradient. F-type ATPases consist of two structural domains, F(1) containing the extramembraneous catalytic core and F(0) containing the membrane proton channel, linked together by a central stalk and a peripheral stalk. During catalysis, ATP synthesis in the catalytic domain of F(1) is coupled via a rotary mechanism of the central stalk subunits to proton translocation. This protein is part of the stalk that links CF(0) to CF(1). It either transmits conformational changes from CF(0) to CF(1) or is implicated in proton conduction. The sequence is that of ATP synthase subunit delta from Shewanella loihica (strain ATCC BAA-1088 / PV-4).